We begin with the raw amino-acid sequence, 147 residues long: Cytochrome c-type biogenesis protein CcmE (147 aa).

The Cytoplasmic portion of the chain corresponds to 1–9 (MKSLKKKRR). A helical; Signal-anchor for type II membrane protein membrane pass occupies residues 10 to 30 (IQILVAAAVALVLAVGLIGYG). At 31 to 147 (FRDGINLYRS…EQGVYQEPNS (117 aa)) the chain is on the periplasmic side. 2 residues coordinate heme: His123 and Tyr127.

This sequence belongs to the CcmE/CycJ family.

It localises to the cell inner membrane. Its function is as follows. Heme chaperone required for the biogenesis of c-type cytochromes. Transiently binds heme delivered by CcmC and transfers the heme to apo-cytochromes in a process facilitated by CcmF and CcmH. The polypeptide is Cytochrome c-type biogenesis protein CcmE (Paracoccus denitrificans (strain Pd 1222)).